The sequence spans 163 residues: UPF0416 protein RBE_0909 (163 aa).

Belongs to the UPF0416 family.

This is UPF0416 protein RBE_0909 from Rickettsia bellii (strain RML369-C).